Here is a 163-residue protein sequence, read N- to C-terminus: MRAVIQKTVGAKVDVVSEAGTETCGKIDGGFVVLLGVTHSDTEKDARYIADKIAHLRVFEDEAGKLNLSLKDVGGAVLLVSQFTLYADAASGRRPSFSQAAPAEQAQRLYLRTAELLRGHGIHVETGRFRTHMQVSLCNDGPVTILLDSFMTRISPKMKVVPD.

Positions 141 to 142 match the Gly-cisPro motif, important for rejection of L-amino acids motif; the sequence is GP.

This sequence belongs to the DTD family. Homodimer.

It is found in the cytoplasm. It carries out the reaction glycyl-tRNA(Ala) + H2O = tRNA(Ala) + glycine + H(+). The catalysed reaction is a D-aminoacyl-tRNA + H2O = a tRNA + a D-alpha-amino acid + H(+). Its function is as follows. An aminoacyl-tRNA editing enzyme that deacylates mischarged D-aminoacyl-tRNAs. Also deacylates mischarged glycyl-tRNA(Ala), protecting cells against glycine mischarging by AlaRS. Acts via tRNA-based rather than protein-based catalysis; rejects L-amino acids rather than detecting D-amino acids in the active site. By recycling D-aminoacyl-tRNA to D-amino acids and free tRNA molecules, this enzyme counteracts the toxicity associated with the formation of D-aminoacyl-tRNA entities in vivo and helps enforce protein L-homochirality. The chain is D-aminoacyl-tRNA deacylase from Neisseria gonorrhoeae (strain ATCC 700825 / FA 1090).